The chain runs to 285 residues: Probable endonuclease 4 (285 aa).

Zn(2+)-binding residues include His-69, His-109, Glu-145, Asp-179, His-182, His-216, Asp-229, His-231, and Glu-261.

This sequence belongs to the AP endonuclease 2 family. Zn(2+) is required as a cofactor.

The catalysed reaction is Endonucleolytic cleavage to 5'-phosphooligonucleotide end-products.. Its function is as follows. Endonuclease IV plays a role in DNA repair. It cleaves phosphodiester bonds at apurinic or apyrimidinic (AP) sites, generating a 3'-hydroxyl group and a 5'-terminal sugar phosphate. This chain is Probable endonuclease 4, found in Salmonella heidelberg (strain SL476).